The following is a 218-amino-acid chain: UPF0126 membrane protein SCO4104 (218 aa).

The next 7 membrane-spanning stretches (helical) occupy residues 8-28 (LLAL…LTAV), 37-57 (GVVV…DVLI), 64-84 (AFLD…AFAV), 91-111 (LEPA…VIGA), 118-138 (GLAV…GGTI), 154-174 (LYAI…ETGV), and 179-199 (AALG…HFGI).

It belongs to the UPF0126 family.

The protein localises to the cell membrane. The polypeptide is UPF0126 membrane protein SCO4104 (Streptomyces coelicolor (strain ATCC BAA-471 / A3(2) / M145)).